The following is a 285-amino-acid chain: Energy-coupling factor transporter ATP-binding protein EcfA2 (285 aa).

The ABC transporter domain maps to 6–242; it reads LKVEELNYNY…KEVIRKVNLR (237 aa). Residue 39-46 participates in ATP binding; it reads GGNGVGKS.

The protein belongs to the ABC transporter superfamily. Energy-coupling factor EcfA family. As to quaternary structure, forms a stable energy-coupling factor (ECF) transporter complex composed of 2 membrane-embedded substrate-binding proteins (S component), 2 ATP-binding proteins (A component) and 2 transmembrane proteins (T component).

The protein localises to the cell membrane. In terms of biological role, ATP-binding (A) component of a common energy-coupling factor (ECF) ABC-transporter complex. Unlike classic ABC transporters this ECF transporter provides the energy necessary to transport a number of different substrates. The chain is Energy-coupling factor transporter ATP-binding protein EcfA2 from Clostridium perfringens (strain SM101 / Type A).